The chain runs to 141 residues: Hemoglobin subunit alpha (141 aa).

The Globin domain occupies 1-141 (VLSPADKTNV…VSTVLTSKYR (141 aa)). At serine 3 the chain carries Phosphoserine. Lysine 7 carries the N6-succinyllysine modification. Threonine 8 is modified (phosphothreonine). Lysine 11 carries the N6-succinyllysine modification. Position 16 is an N6-acetyllysine; alternate (lysine 16). Lysine 16 carries the N6-succinyllysine; alternate modification. A Phosphotyrosine modification is found at tyrosine 24. Serine 35 is modified (phosphoserine). Lysine 40 carries the post-translational modification N6-succinyllysine. A Phosphoserine modification is found at serine 49. Histidine 58 is an O2 binding site. Histidine 87 serves as a coordination point for heme b. At serine 102 the chain carries Phosphoserine. At threonine 108 the chain carries Phosphothreonine. Serine 124 and serine 131 each carry phosphoserine. Residues threonine 134 and threonine 137 each carry the phosphothreonine modification. Serine 138 is modified (phosphoserine).

It belongs to the globin family. In terms of assembly, heterotetramer of two alpha chains and two beta chains. Red blood cells.

Functionally, involved in oxygen transport from the lung to the various peripheral tissues. In terms of biological role, hemopressin acts as an antagonist peptide of the cannabinoid receptor CNR1. Hemopressin-binding efficiently blocks cannabinoid receptor CNR1 and subsequent signaling. In Urocitellus parryii (Arctic ground squirrel), this protein is Hemoglobin subunit alpha (HBA).